The primary structure comprises 356 residues: Protein RecA (356 aa).

69–76 lines the ATP pocket; it reads GPESSGKT.

This sequence belongs to the RecA family.

It is found in the cytoplasm. In terms of biological role, can catalyze the hydrolysis of ATP in the presence of single-stranded DNA, the ATP-dependent uptake of single-stranded DNA by duplex DNA, and the ATP-dependent hybridization of homologous single-stranded DNAs. It interacts with LexA causing its activation and leading to its autocatalytic cleavage. This is Protein RecA from Gloeothece citriformis (strain PCC 7424) (Cyanothece sp. (strain PCC 7424)).